The following is a 446-amino-acid chain: Movement protein TGB1 (446 aa).

Residues 40–60 (NKLDKRLQNTRKKNKNKEKTR) form a disordered region. Residues 160 to 303 (KACCKKERNQ…WLHVPIVFSS (144 aa)) form the (+)RNA virus helicase ATP-binding domain. Residue 193-200 (GVPGSGKS) coordinates ATP. Residues 304–444 (DSSHRFGPET…CYGEEHRPDE (141 aa)) form the (+)RNA virus helicase C-terminal domain.

This sequence belongs to the virgaviridae/benyvirus TGB1 movement protein family. In terms of assembly, homooligomer. Interacts with movement protein TGB3. TGB1-TGB3-TGB2 complex formation is enhanced by ATP hydrolysis. Interacts with the suppressor of RNA silencing (via N-terminus). It depends on Mg(2+) as a cofactor.

The protein resides in the host cell junction. Its subcellular location is the host plasmodesma. It is found in the host nucleus. The protein localises to the host cytoplasm. It localises to the host nucleolus. The protein resides in the host cytoskeleton. The enzyme catalyses ATP + H2O = ADP + phosphate + H(+). In terms of biological role, participates in the transport of viral genome to neighboring plant cells directly through plasmodesmata, without any budding. Multifunctional movement protein with RNA-binding, ATPase and helicase activities. Engages in homologous interactions leading to the formation of a ribonucleoprotein complex containing plus-sense viral RNAs (vRNPs). ATPase activity is probably required for vRNPs movement complex assembly. Intracellular delivery of TGBp1-containing vRNPs to plasmodesmata is facilitated by TGBp2 and TGBp3. The protein is Movement protein TGB1 of Arachis hypogaea (Peanut).